Reading from the N-terminus, the 320-residue chain is Prophage side tail fiber protein homolog StfQ (320 aa).

Disordered stretches follow at residues 147 to 213 (SGRA…HKSS) and 241 to 270 (TTSGSGQTRNAGKTSSDGAHTHSLSGTAAS). 2 stretches are compositionally biased toward polar residues: residues 172 to 206 (DLGTETTSSFDYGTKSTNNTGAHTHSISGTANSAG) and 241 to 258 (TTSGSGQTRNAGKTSSDG). The segment covering 261–270 (THSLSGTAAS) has biased composition (low complexity).

It belongs to the tail fiber family.

The sequence is that of Prophage side tail fiber protein homolog StfQ (stfQ) from Escherichia coli (strain K12).